Reading from the N-terminus, the 306-residue chain is Non-specific ribonucleoside hydrolase RihC (306 aa).

Residue histidine 235 is part of the active site.

The protein belongs to the IUNH family. RihC subfamily.

In terms of biological role, hydrolyzes both purine and pyrimidine ribonucleosides with a broad-substrate specificity. The protein is Non-specific ribonucleoside hydrolase RihC of Salmonella enteritidis PT4 (strain P125109).